Here is a 645-residue protein sequence, read N- to C-terminus: Protein LHY (645 aa).

The residue at position 6 (Ser6) is a Phosphoserine. Positions 19–73 (TITKQRERWTEDEHERFLEALRLYGRAWQRIEEHIGTKTAVQIRSHAQKFFTKLE) constitute an HTH myb-type domain. The H-T-H motif DNA-binding region spans 46–69 (WQRIEEHIGTKTAVQIRSHAQKFF). Disordered stretches follow at residues 89–127 (IEIP…AKLV), 149–212 (EKTS…GTTV), 410–437 (QNLA…ADSK), and 458–500 (AQKK…TDEN). The span at 110–120 (NNGTSSSQVSS) shows a compositional bias: polar residues. Over residues 149–158 (EKTSTGKENQ) the composition is skewed to basic and acidic residues. Residues 159–169 (DENCSGVSTVN) show a composition bias toward polar residues. Residues 197-207 (VPKKNKDKDGN) are compositionally biased toward basic and acidic residues. A compositionally biased stretch (polar residues) spans 468–478 (SCGSNTPSGSD). Residues 483–498 (ALDKMEKDKEDVKETD) are compositionally biased toward basic and acidic residues.

In terms of assembly, homodimer or heterodimer with CCA1. Interacts with CCA1 (via internal domain); independently of photoperiod. Functions probably as part of a large complex. Interacts with CKB1 and CKB3. Interacts with LNK1 and LNK2. In terms of processing, phosphorylated by CK2. In terms of tissue distribution, expressed in leaves, roots, stems, flowers and siliques.

It is found in the nucleus. In terms of biological role, transcription factor involved in the circadian clock. Binds to the promoter region of APRR1/TOC1 and TCP21/CHE to repress their transcription. Represses both CCA1 and itself. May recognize the promoter of JMJ14 to regulates its expression during the night in a circadian manner. In Arabidopsis thaliana (Mouse-ear cress), this protein is Protein LHY.